The following is a 179-amino-acid chain: Large ribosomal subunit protein uL6 (179 aa).

The protein belongs to the universal ribosomal protein uL6 family. In terms of assembly, part of the 50S ribosomal subunit.

This protein binds to the 23S rRNA, and is important in its secondary structure. It is located near the subunit interface in the base of the L7/L12 stalk, and near the tRNA binding site of the peptidyltransferase center. This chain is Large ribosomal subunit protein uL6, found in Prochlorococcus marinus (strain MIT 9313).